Here is an 85-residue protein sequence, read N- to C-terminus: Cell division topological specificity factor (85 aa).

The protein belongs to the MinE family.

In terms of biological role, prevents the cell division inhibition by proteins MinC and MinD at internal division sites while permitting inhibition at polar sites. This ensures cell division at the proper site by restricting the formation of a division septum at the midpoint of the long axis of the cell. The chain is Cell division topological specificity factor from Thioalkalivibrio sulfidiphilus (strain HL-EbGR7).